Here is a 235-residue protein sequence, read N- to C-terminus: RING-H2 finger protein ATL33 (235 aa).

Residues 64–84 (LIFVVIAFVAVPALVYALFFN) form a helical membrane-spanning segment. Residues 87–133 (CSSSRRNSSSSRTSSSSDDTPHATVDTPPITETTVTSESGGKFHKDT) are disordered. The span at 88-103 (SSSRRNSSSSRTSSSS) shows a compositional bias: low complexity. Positions 116-125 (ITETTVTSES) are enriched in polar residues. The segment at 142 to 184 (CSVCLMVFTDSDELRQLSECKHAFHVLCIETWLKDHPNCPICR) adopts an RING-type; atypical zinc-finger fold. The segment covering 201–216 (NVNGNVNRSGGNRRVS) has biased composition (low complexity). Residues 201–235 (NVNGNVNRSGGNRRVSATSRDDDWRQGLPDASSLV) are disordered.

This sequence belongs to the RING-type zinc finger family. ATL subfamily.

The protein localises to the membrane. It catalyses the reaction S-ubiquitinyl-[E2 ubiquitin-conjugating enzyme]-L-cysteine + [acceptor protein]-L-lysine = [E2 ubiquitin-conjugating enzyme]-L-cysteine + N(6)-ubiquitinyl-[acceptor protein]-L-lysine.. It functions in the pathway protein modification; protein ubiquitination. This chain is RING-H2 finger protein ATL33 (ATL33), found in Arabidopsis thaliana (Mouse-ear cress).